Reading from the N-terminus, the 570-residue chain is Nucleoprotein (570 aa).

A binding site for the cap structure m7GTP region spans residues M54 to I241. Positions 390 and 392 each coordinate Mn(2+). Positions 400, 507, 510, and 530 each coordinate Zn(2+). Mn(2+) is bound at residue D534.

Belongs to the arenaviridae nucleocapsid protein family. Homomultimerizes to form the nucleocapsid. Binds to viral genomic RNA. Interacts with glycoprotein G2. Interacts with protein Z; this interaction probably directs the encapsidated genome to budding sites. Interacts with protein L; this interaction does not interfere with Z-L interaction. Interacts with host IKBKE (via Protein kinase domain); the interaction inhibits IKBKE kinase activity.

Its subcellular location is the virion. The protein resides in the host cytoplasm. Functionally, encapsidates the genome, protecting it from nucleases. The encapsidated genomic RNA is termed the nucleocapsid (NC). Serves as template for viral transcription and replication. The increased presence of protein N in host cell does not seem to trigger the switch from transcription to replication as observed in other negative strain RNA viruses. Through the interaction with host IKBKE, strongly inhibits the phosphorylation and nuclear translocation of host IRF3, a protein involved in interferon activation pathway, leading to the inhibition of interferon-beta and IRF3-dependent promoters activation. Also encodes a functional 3'-5' exoribonuclease that degrades preferentially dsRNA substrates and thereby participates in the suppression of interferon induction. The protein is Nucleoprotein of Homo sapiens (Human).